The chain runs to 631 residues: Alpha-dioxygenase 2 (631 aa).

The first 20 residues, 1-20 (MGFSPSSSWFLHPQLHHVVS), serve as a signal peptide directing secretion. Histidine 157 provides a ligand contact to heme b. Tyrosine 378 acts as the Proton acceptor in catalysis. Histidine 381 is a binding site for heme b. The N-linked (GlcNAc...) asparagine glycan is linked to asparagine 583.

This sequence belongs to the peroxidase family. The cofactor is heme b. In terms of tissue distribution, expressed in seedlings (cotyledons, young leaves, and hypocotyls), flowers, siliques and old leaves.

Its function is as follows. Alpha-dioxygenase that catalyzes the primary oxygenation of fatty acids into oxylipins. May be involved in the senescence process. The protein is Alpha-dioxygenase 2 (DOX2) of Arabidopsis thaliana (Mouse-ear cress).